Reading from the N-terminus, the 428-residue chain is Dihydroorotase (428 aa).

2 residues coordinate Zn(2+): His-61 and His-63. Substrate contacts are provided by residues 63 to 65 (HLR) and Asn-95. The Zn(2+) site is built by Asp-153, His-180, and His-233. Asn-279 is a binding site for substrate. Position 306 (Asp-306) interacts with Zn(2+). Asp-306 is a catalytic residue. Substrate is bound by residues His-310 and 324-325 (FG).

Belongs to the metallo-dependent hydrolases superfamily. DHOase family. Class I DHOase subfamily. Requires Zn(2+) as cofactor.

The enzyme catalyses (S)-dihydroorotate + H2O = N-carbamoyl-L-aspartate + H(+). It functions in the pathway pyrimidine metabolism; UMP biosynthesis via de novo pathway; (S)-dihydroorotate from bicarbonate: step 3/3. In terms of biological role, catalyzes the reversible cyclization of carbamoyl aspartate to dihydroorotate. The sequence is that of Dihydroorotase from Geobacillus kaustophilus (strain HTA426).